Consider the following 117-residue polypeptide: Larval cuticle protein A2B (117 aa).

Repeat unit 1 spans residues 12–15 (AAPV). A Chitin-binding type R&amp;R domain is found at 29–95 (HPQYQYGYDV…AVVHREPLVA (67 aa)). Residues 108-111 (AAPV) form repeat 2.

Its function is as follows. Component of the cuticle of the larva of Tenebrio molitor. The sequence is that of Larval cuticle protein A2B from Tenebrio molitor (Yellow mealworm beetle).